The following is a 392-amino-acid chain: GDP-mannose transporter (392 aa).

Residues 1 to 11 (MDDKKNEDLEM) are compositionally biased toward basic and acidic residues. Residues 1-25 (MDDKKNEDLEMRNFNGRSSPSQRDP) form a disordered region. At 1 to 45 (MDDKKNEDLEMRNFNGRSSPSQRDPFLAKPGAAAKRGNSAFDLSN) the chain is on the cytoplasmic side. A helical membrane pass occupies residues 46-66 (VTNSPGISILAYCLASISMTV). Residues 67-76 (TNKYCVSGSN) are Lumenal-facing. The helical transmembrane segment at 77-97 (WNLNFFYLAIQSVVCIIAIII) threads the bilayer. At 98–116 (CKQAGLITNLAPFDTKKAK) the chain is on the cytoplasmic side. Residues 117 to 139 (TWFPISLLLVGMIYTSTKALQFL) traverse the membrane as a helical segment. Topologically, residues 140–142 (SVP) are lumenal. Residues 143 to 165 (VYTIFKNLTIIVIAYGEVLWFGG) form a helical membrane-spanning segment. Over 166–171 (SVTPSA) the chain is Cytoplasmic. A helical membrane pass occupies residues 172–191 (LFSFGLMVLSSVVAAWADIQ). At 192 to 210 (HALYGGGAAQSAEAAAALS) the chain is on the lumenal side. The helical transmembrane segment at 211–231 (TLNAGYAWMGMNVFCTAAYVL) threads the bilayer. Over 232–246 (SMRKVIKKMNFKDWD) the chain is Cytoplasmic. A helical transmembrane segment spans residues 247–267 (TMFYNNLLTIPVLFVCSFIFE). Residues asparagine 268 and asparagine 273 are each glycosylated (N-linked (GlcNAc...) asparagine). Residues 268–285 (NWSSENLTKNFPLETRNN) lie on the Lumenal side of the membrane. The helical transmembrane segment at 286–306 (LILGMIYSGLATIFISYCSAW) threads the bilayer. Over 307-314 (CIRVTSST) the chain is Cytoplasmic. Residues 315–337 (TYSMVGALNKLPIAVSGLVFFAA) traverse the membrane as a helical segment. Residues 338 to 340 (PVT) are Lumenal-facing. A helical membrane pass occupies residues 341–360 (FGSVSAIFIGFVSGIVYAWA). The Cytoplasmic segment spans residues 361–392 (KVRQNQSKGNILPTTQPVMSASSQSNRDAAKA). A disordered region spans residues 373-392 (PTTQPVMSASSQSNRDAAKA).

This sequence belongs to the TPT transporter family. SLC35D subfamily. As to quaternary structure, homooligomer.

Its subcellular location is the golgi apparatus membrane. It localises to the cytoplasmic vesicle membrane. It is found in the endoplasmic reticulum membrane. Functionally, involved in the import of GDP-mannose from the cytoplasm into the Golgi lumen. The chain is GDP-mannose transporter (gmt1) from Botryotinia fuckeliana (strain B05.10) (Noble rot fungus).